We begin with the raw amino-acid sequence, 235 residues long: Lipoprotein-releasing system ATP-binding protein LolD (235 aa).

The ABC transporter domain maps to 5-235 (LECRDIRKVY…LMTESASVEG (231 aa)). Residue 41–48 (GSSGSGKS) coordinates ATP.

Belongs to the ABC transporter superfamily. Lipoprotein translocase (TC 3.A.1.125) family. In terms of assembly, the complex is composed of two ATP-binding proteins (LolD) and two transmembrane proteins (LolC and LolE).

It is found in the cell inner membrane. Its function is as follows. Part of the ABC transporter complex LolCDE involved in the translocation of mature outer membrane-directed lipoproteins, from the inner membrane to the periplasmic chaperone, LolA. Responsible for the formation of the LolA-lipoprotein complex in an ATP-dependent manner. This Vibrio parahaemolyticus serotype O3:K6 (strain RIMD 2210633) protein is Lipoprotein-releasing system ATP-binding protein LolD.